The primary structure comprises 565 residues: Carboxylesterase 1D (565 aa).

Residues 1–18 (MRLYPLVWLFLAACTAWG) form the signal peptide. The N-linked (GlcNAc...) asparagine glycan is linked to Asn79. The cysteines at positions 87 and 116 are disulfide-linked. Residue Ser221 is the Acyl-ester intermediate of the active site. Residues Cys273 and Cys284 are joined by a disulfide bond. Glu353 (charge relay system) is an active-site residue. Lys382 bears the N6-succinyllysine mark. His466 acts as the Charge relay system in catalysis. An N-linked (GlcNAc...) asparagine glycan is attached at Asn489. The Prevents secretion from ER motif lies at 562–565 (HVEL).

This sequence belongs to the type-B carboxylesterase/lipase family. In terms of assembly, homotrimer. In terms of tissue distribution, detected in liver, lung and testis, but not in kidney (at protein level).

The protein resides in the endoplasmic reticulum lumen. The protein localises to the cytoplasm. It localises to the cytosol. It is found in the lipid droplet. Its subcellular location is the microsome. The catalysed reaction is all-trans-retinyl hexadecanoate + H2O = all-trans-retinol + hexadecanoate + H(+). The enzyme catalyses a carboxylic ester + H2O = an alcohol + a carboxylate + H(+). It catalyses the reaction a long-chain fatty acyl ethyl ester + H2O = a long-chain fatty acid + ethanol + H(+). Its activity is regulated as follows. FAEE-synthesizing and PNPB-hydrolyzing activities are both inhibited by DFP. Functionally, major lipase in white adipose tissue. Involved in the metabolism of xenobiotics and of natural substrates. Hydrolyzes triacylglycerols and monoacylglycerols, with a preference for monoacylglycerols. The susceptibility of the substrate increases with decreasing acyl chain length of the fatty acid moiety. Catalyzes the synthesis of fatty acid ethyl esters. Hydrolyzes retinyl esters. The protein is Carboxylesterase 1D of Rattus norvegicus (Rat).